Reading from the N-terminus, the 168-residue chain is Signal peptidase complex catalytic subunit SEC11 (168 aa).

The Cytoplasmic segment spans residues 1-12 (MNLRLELTRFLN). Residues 13-30 (LCFALASAFMFWKGLSIV) traverse the membrane as a helical; Signal-anchor for type II membrane protein segment. The Lumenal segment spans residues 31 to 168 (TNSHSPIVVV…IALSALLSNE (138 aa)). Residues Ser-44, His-83, and Asp-110 each act as charge relay system in the active site. Positions 154–165 (GLMGLIALSALL) are C-terminal short (CTS) helix.

It belongs to the peptidase S26B family. Component of the signal peptidase complex (SPC) composed of a catalytic subunit SEC11 and three accessory subunits SPC1, SPC2 and SPC3. The complex induces a local thinning of the ER membrane which is used to measure the length of the signal peptide (SP) h-region of protein substrates. This ensures the selectivity of the complex towards h-regions shorter than 18-20 amino acids. SPC associates with the translocon complex.

The protein localises to the endoplasmic reticulum membrane. It carries out the reaction Cleavage of hydrophobic, N-terminal signal or leader sequences from secreted and periplasmic proteins.. Catalytic component of the signal peptidase complex (SPC) which catalyzes the cleavage of N-terminal signal sequences from nascent proteins as they are translocated into the lumen of the endoplasmic reticulum. Specifically cleaves N-terminal signal peptides that contain a hydrophobic alpha-helix (h-region) shorter than 18-20 amino acids. In Lachancea thermotolerans (strain ATCC 56472 / CBS 6340 / NRRL Y-8284) (Yeast), this protein is Signal peptidase complex catalytic subunit SEC11 (SEC11).